A 583-amino-acid polypeptide reads, in one-letter code: Isocitrate dehydrogenase kinase/phosphatase (583 aa).

ATP contacts are provided by residues 315–321 (APGIRGM) and K336. D371 is an active-site residue.

Belongs to the AceK family.

Its subcellular location is the cytoplasm. It catalyses the reaction L-seryl-[isocitrate dehydrogenase] + ATP = O-phospho-L-seryl-[isocitrate dehydrogenase] + ADP + H(+). Functionally, bifunctional enzyme which can phosphorylate or dephosphorylate isocitrate dehydrogenase (IDH) on a specific serine residue. This is a regulatory mechanism which enables bacteria to bypass the Krebs cycle via the glyoxylate shunt in response to the source of carbon. When bacteria are grown on glucose, IDH is fully active and unphosphorylated, but when grown on acetate or ethanol, the activity of IDH declines drastically concomitant with its phosphorylation. This is Isocitrate dehydrogenase kinase/phosphatase from Salmonella enteritidis PT4 (strain P125109).